We begin with the raw amino-acid sequence, 822 residues long: Integrator complex assembly factor BRAT1 (822 aa).

Residues 100–200 (LGLFGESGAP…WPMCAQKIVN (101 aa)) form a required for interaction with NDFIP1 region. HEAT repeat units follow at residues 495–531 (LLFL…IRHW) and 544–576 (SEVP…SSQG). S743 bears the Phosphoserine mark. The short motif at 820–822 (DCY) is the BRAT1-like motif element. A Zn(2+)-binding site is contributed by C821.

The protein belongs to the BRAT1 family. In terms of assembly, part of the multiprotein complex composed of BRAT1, WDR73, as well as integrator complex subunits INTS9 and INTS11. Interacts with BRCA1 and ATM. Interacts with MTOR and RPTOR. Interacts with NDFIP1. Interacts with SMC1A and PRKDC. Ubiquitinated by NEDD4, NEDD4L and ITCH; mono- and polyubiquitinated forms are detected. In terms of tissue distribution, high levels detected in the cortex and much lower levels detected in the cerebellum, spinal cord and lung (at protein level).

It localises to the nucleus. It is found in the cytoplasm. Its function is as follows. Component of a multiprotein complex required for the assembly of the RNA endonuclease module of the integrator complex. Associates with INTS9 and INTS11 in the cytoplasm and blocks the active site of INTS11 to inhibit the endonuclease activity of INTS11 before formation of the full integrator complex. Following dissociation of WDR73 of the complex, BRAT1 facilitates the nuclear import of the INTS9-INTS11 heterodimer. In the nucleus, INTS4 is integrated to the INTS9-INTS11 heterodimer and BRAT1 is released from the mature RNA endonuclease module by inositol hexakisphosphate (InsP6). BRAT1 is also involved in DNA damage response; activates kinases ATM, SMC1A and PRKDC by modulating their phosphorylation status following ionizing radiation (IR) stress. Plays a role in regulating mitochondrial function and cell proliferation. Required for protein stability of MTOR and MTOR-related proteins, and cell cycle progress by growth factors. The protein is Integrator complex assembly factor BRAT1 of Mus musculus (Mouse).